Here is a 371-residue protein sequence, read N- to C-terminus: Glutamate 5-kinase (371 aa).

Residue lysine 10 coordinates ATP. Substrate contacts are provided by serine 50, aspartate 137, and asparagine 149. ATP-binding positions include 169–170 (SD) and 208–214 (TGGMYTK). The PUA domain occupies 274-352 (QGKVYIDDGA…EEIKNILGED (79 aa)).

The protein belongs to the glutamate 5-kinase family.

The protein resides in the cytoplasm. The catalysed reaction is L-glutamate + ATP = L-glutamyl 5-phosphate + ADP. The protein operates within amino-acid biosynthesis; L-proline biosynthesis; L-glutamate 5-semialdehyde from L-glutamate: step 1/2. Catalyzes the transfer of a phosphate group to glutamate to form L-glutamate 5-phosphate. This chain is Glutamate 5-kinase, found in Dictyoglomus thermophilum (strain ATCC 35947 / DSM 3960 / H-6-12).